The following is an 87-amino-acid chain: Small ribosomal subunit protein uS15c (87 aa).

This sequence belongs to the universal ribosomal protein uS15 family. In terms of assembly, part of the 30S ribosomal subunit.

It localises to the plastid. The protein resides in the chloroplast. The protein is Small ribosomal subunit protein uS15c (rps15) of Solanum bulbocastanum (Wild potato).